The sequence spans 699 residues: MAREYKIEDYRNFGIMAHIDAGKTTTTERILYYTGKSHKIGEVHDGAATMDWMEQEQERGITITSAATTTFWKGRDGKMRRFNIIDTPGHVDFTIEVERSLRVLDGAIALLDANAGVEPQTETVWRQAEKYNVPRMIFCNKMDKTGADFYRSVEMIKTRLGATAVVMQLPIGAESDFKGVIDLVEMNALIWRDESLGAQWDVVEIPEDLKAKAEEYREKLIETVVEIDEAAMEAYLEGNMPDNDKIRELVRRGTIDVKFHPMFCGTAFKNKGVQPLLDAVVDYLPSPLDIPAIKGIDFKTEADIERHADDAEPLSMLAFKIMNDPFVGSLTFARIYSGKLEKGSSVLNTVKDKRERVGRMLQMHSNSREDIEEAFAGDIVALAGLKETTTGDTLCDPLKPVILERMEFPEPVIQIAIEPKSKGDQEKMGLALNRLAAEDPSFRVKTDQESGQTIIAGMGELHLDIIVDRMRREFKVEANVGAPQVAYRETITRQTEEDYTHKKQTGGTGQFARVKIIFEPNPEGEDFKFESKIVGGSVPKEYIPGVQKGIESVLSSGPLAGFPMLGVKATLIDGAFHDVDSSVLAFEIASRACFREAAKKAGAQLLEPMMKVEVVTPEDYVGDVIGDLNSRRGQIQGQETRGIAVVISANVPLANMFKYVDNLRSMSQGRAQYTMTFDHYAPVPSNVATEIQAKYSGQK.

A tr-type G domain is found at Glu-8 to Leu-288. GTP contacts are provided by residues Ala-17–Thr-24, Asp-86–His-90, and Asn-140–Asp-143.

It belongs to the TRAFAC class translation factor GTPase superfamily. Classic translation factor GTPase family. EF-G/EF-2 subfamily.

Its subcellular location is the cytoplasm. Catalyzes the GTP-dependent ribosomal translocation step during translation elongation. During this step, the ribosome changes from the pre-translocational (PRE) to the post-translocational (POST) state as the newly formed A-site-bound peptidyl-tRNA and P-site-bound deacylated tRNA move to the P and E sites, respectively. Catalyzes the coordinated movement of the two tRNA molecules, the mRNA and conformational changes in the ribosome. This Rhizobium etli (strain CIAT 652) protein is Elongation factor G.